Here is a 368-residue protein sequence, read N- to C-terminus: Glutamate 5-kinase (368 aa).

ATP is bound at residue lysine 15. Positions 55, 143, and 155 each coordinate substrate. ATP is bound by residues 175–176 (SD) and 217–223 (SGGMVSK). One can recognise a PUA domain in the interval 277–354 (EGRLTIDAGA…DAQEAALGYA (78 aa)).

The protein belongs to the glutamate 5-kinase family.

The protein localises to the cytoplasm. The catalysed reaction is L-glutamate + ATP = L-glutamyl 5-phosphate + ADP. Its pathway is amino-acid biosynthesis; L-proline biosynthesis; L-glutamate 5-semialdehyde from L-glutamate: step 1/2. Functionally, catalyzes the transfer of a phosphate group to glutamate to form L-glutamate 5-phosphate. The sequence is that of Glutamate 5-kinase from Sphingopyxis alaskensis (strain DSM 13593 / LMG 18877 / RB2256) (Sphingomonas alaskensis).